The primary structure comprises 547 residues: Sterol carrier protein 2 (547 aa).

A phosphoserine mark is found at S3 and S8. The residue at position 40 (K40) is an N6-succinyllysine. At K132 the chain carries N6-acetyllysine; alternate. At K132 the chain carries N6-succinyllysine; alternate. Residue K168 is modified to N6-succinyllysine. Position 177 is an N6-acetyllysine (K177). At K183 the chain carries N6-acetyllysine; alternate. K183 carries the N6-succinyllysine; alternate modification. N6-succinyllysine is present on residues K211 and K282. An N6-acetyllysine; alternate mark is found at K341, K432, K438, K443, and K453. N6-succinyllysine; alternate occurs at positions 341, 432, 438, 443, and 453. One can recognise an SCP2 domain in the interval 433–543 (ANLIFKEIEK…KLQSLQLQPD (111 aa)). Residue K464 is modified to N6-succinyllysine. The residue at position 470 (K470) is an N6-acetyllysine; alternate. An N6-succinyllysine; alternate modification is found at K470. An N6-succinyllysine modification is found at K479. K491 carries the post-translational modification N6-acetyllysine. N6-succinyllysine is present on residues K492 and K511. A Phosphoserine modification is found at S516. N6-succinyllysine occurs at positions 522 and 534. At S537 the chain carries Phosphoserine. K544 is subject to N6-succinyllysine. A Microbody targeting signal motif is present at residues 545–547 (AKL).

This sequence in the N-terminal section; belongs to the thiolase-like superfamily. Thiolase family. Interacts with PEX5; the interaction is essential for peroxisomal import. PreSCP2, a protein with a molecular mass of about 15 kDa, is processed into its mature form (SCP2) by proteolytic cleavage of a 20 residue leader sequence after translocation into peroxisomes. As to expression, liver &gt; intestine &gt; brain &gt; lung, colon, stomach, spleen, kidney, heart and ovary. In terms of tissue distribution, expressed in liver (at protein level).

The protein resides in the peroxisome. It localises to the cytoplasm. Its subcellular location is the mitochondrion. It carries out the reaction an acyl-CoA + acetyl-CoA = a 3-oxoacyl-CoA + CoA. The catalysed reaction is choloyl-CoA + propanoyl-CoA = 3alpha,7alpha,12alpha-trihydroxy-24-oxo-5beta-cholestan-26-oyl-CoA + CoA. The enzyme catalyses 4,8,12-trimethyltridecanoyl-CoA + propanoyl-CoA = 3-oxopristanoyl-CoA + CoA. It catalyses the reaction hexanoyl-CoA + acetyl-CoA = 3-oxooctanoyl-CoA + CoA. It carries out the reaction tetradecanoyl-CoA + acetyl-CoA = 3-oxohexadecanoyl-CoA + CoA. The catalysed reaction is 3-oxohexadecanedioyl-CoA + CoA = tetradecanedioyl-CoA + acetyl-CoA. The enzyme catalyses propanoyl-CoA + tetradecanoyl-CoA = 3-oxo-2-methylhexadecanoyl-CoA + CoA. It catalyses the reaction butanoyl-CoA + acetyl-CoA = 3-oxohexanoyl-CoA + CoA. It carries out the reaction octanoyl-CoA + acetyl-CoA = 3-oxodecanoyl-CoA + CoA. The catalysed reaction is decanoyl-CoA + acetyl-CoA = 3-oxododecanoyl-CoA + CoA. The enzyme catalyses dodecanoyl-CoA + acetyl-CoA = 3-oxotetradecanoyl-CoA + CoA. It catalyses the reaction hexadecanoyl-CoA + acetyl-CoA = 3-oxooctadecanoyl-CoA + CoA. It carries out the reaction 3-oxo-(9Z-octadecenoyl)-CoA + CoA = (7Z)-hexadecenoyl-CoA + acetyl-CoA. The catalysed reaction is 7-dehydrocholesterol(in) = 7-dehydrocholesterol(out). Plays a crucial role in the peroxisomal oxidation of branched-chain fatty acids. Catalyzes the last step of the peroxisomal beta-oxidation of branched chain fatty acids and the side chain of the bile acid intermediates di- and trihydroxycoprostanic acids (DHCA and THCA). Also active with medium and long straight chain 3-oxoacyl-CoAs. Stimulates the microsomal conversion of 7-dehydrocholesterol to cholesterol and transfers phosphatidylcholine and 7-dehydrocholesterol between membrances, in vitro. Isoforms SCP2 and SCPx cooperate in peroxisomal oxidation of certain naturally occurring tetramethyl-branched fatty acyl-CoAs. Functionally, mediates the transfer of all common phospholipids, cholesterol and gangliosides from the endoplasmic reticulum to the plasma membrane. May play a role in regulating steroidogenesis. Stimulates the microsomal conversion of 7-dehydrocholesterol to cholesterol. Also binds fatty acids and fatty acyl Coenzyme A (CoA) such as phytanoyl-CoA. Involved in the regulation phospholipid synthesis in endoplasmic reticulum enhancing the incorporation of exogenous fatty acid into glycerides. Seems to stimulate the rate-limiting step in phosphatidic acid formation mediated by GPAT3. Isoforms SCP2 and SCPx cooperate in peroxisomal oxidation of certain naturally occurring tetramethyl-branched fatty acyl-CoAs. This chain is Sterol carrier protein 2, found in Rattus norvegicus (Rat).